The sequence spans 96 residues: Co-chaperonin GroES (96 aa).

It belongs to the GroES chaperonin family. As to quaternary structure, heptamer of 7 subunits arranged in a ring. Interacts with the chaperonin GroEL.

The protein localises to the cytoplasm. In terms of biological role, together with the chaperonin GroEL, plays an essential role in assisting protein folding. The GroEL-GroES system forms a nano-cage that allows encapsulation of the non-native substrate proteins and provides a physical environment optimized to promote and accelerate protein folding. GroES binds to the apical surface of the GroEL ring, thereby capping the opening of the GroEL channel. The chain is Co-chaperonin GroES from Caulobacter vibrioides (strain ATCC 19089 / CIP 103742 / CB 15) (Caulobacter crescentus).